The primary structure comprises 203 residues: Outer-membrane lipoprotein LolB (203 aa).

The N-terminal stretch at 1–20 is a signal peptide; sequence MNRSRRLALLCLGVPLLLQA. The N-palmitoyl cysteine moiety is linked to residue cysteine 21. Cysteine 21 carries the S-diacylglycerol cysteine lipid modification.

Belongs to the LolB family. Monomer.

It is found in the cell outer membrane. Functionally, plays a critical role in the incorporation of lipoproteins in the outer membrane after they are released by the LolA protein. The protein is Outer-membrane lipoprotein LolB of Cupriavidus taiwanensis (strain DSM 17343 / BCRC 17206 / CCUG 44338 / CIP 107171 / LMG 19424 / R1) (Ralstonia taiwanensis (strain LMG 19424)).